The primary structure comprises 62 residues: Sperm protamine P1 (62 aa).

A disordered region spans residues 1–62 (MARYRHSRSR…RYSRRRRRRY (62 aa)).

It belongs to the protamine P1 family. In terms of tissue distribution, testis.

It localises to the nucleus. The protein localises to the chromosome. In terms of biological role, protamines substitute for histones in the chromatin of sperm during the haploid phase of spermatogenesis. They compact sperm DNA into a highly condensed, stable and inactive complex. This chain is Sperm protamine P1 (PRM1), found in Thylogale stigmatica (Red-legged pademelon).